A 230-amino-acid polypeptide reads, in one-letter code: Large ribosomal subunit protein uL1 (230 aa).

It belongs to the universal ribosomal protein uL1 family. Part of the 50S ribosomal subunit.

Its function is as follows. Binds directly to 23S rRNA. The L1 stalk is quite mobile in the ribosome, and is involved in E site tRNA release. Protein L1 is also a translational repressor protein, it controls the translation of the L11 operon by binding to its mRNA. This is Large ribosomal subunit protein uL1 from Acidiphilium cryptum (strain JF-5).